Here is a 21-residue protein sequence, read N- to C-terminus: Trypsin (21 aa).

Residues 1–7 (FPIEEDK) constitute a propeptide, activation peptide. In terms of domain architecture, Peptidase S1 spans 8-21 (IVGGYECPKHXVPW).

Belongs to the peptidase S1 family.

It is found in the secreted. Its subcellular location is the extracellular space. It catalyses the reaction Preferential cleavage: Arg-|-Xaa, Lys-|-Xaa.. The protein is Trypsin of Protopterus aethiopicus (Marbled lungfish).